Here is a 3032-residue protein sequence, read N- to C-terminus: Biorientation of chromosomes in cell division protein 1-like 1 (3032 aa).

The segment covering 1–31 has biased composition (pro residues); that stretch reads MATNPQPQPPPPAPPPPPPQPQPPPPPPGPG. Disordered stretches follow at residues 1–48, 164–195, 214–397, and 409–465; these read MATN…GAGD, EEAA…SANV, NAAR…LDSD, and VHTS…RGVR. Residues 32–46 show a composition bias toward gly residues; the sequence is AGPGASGPGSAGAGA. The span at 234 to 243 shows a compositional bias: polar residues; it reads KLSSQPSTDV. The segment covering 244–261 has biased composition (basic and acidic residues); that stretch reads STDKERGSEDATEREKAT. Serine 264 carries the post-translational modification Phosphoserine. The span at 310–391 shows a compositional bias: basic and acidic residues; it reads TDPKIKSMDK…RAAEGTKEDC (82 aa). The segment covering 416–441 has biased composition (acidic residues); it reads SFEEDTEEEVVVSESMEEGEITSEDE. The residue at position 471 (lysine 471) is an N6-acetyllysine. A phosphoserine mark is found at serine 480 and serine 482. Disordered stretches follow at residues 480–1153, 1165–1296, 1309–1366, 1424–1491, 1675–1701, 1740–1858, and 1934–1978; these read SDSD…HKAT, MVDS…HNSN, GGRA…LSED, AAGE…SGRR, GSLS…TEGT, AKPQ…GHAS, and ALAG…ISTG. 2 stretches are compositionally biased toward basic and acidic residues: residues 488–503 and 510–525; these read VEQR…EERL and REKL…EKTK. The residue at position 534 (lysine 534) is an N6-acetyllysine. Composition is skewed to basic and acidic residues over residues 547 to 568 and 578 to 653; these read LEPK…EKKV and SRNV…EYKR. Phosphoserine occurs at positions 632 and 656. Residue threonine 657 is modified to Phosphothreonine. Composition is skewed to basic and acidic residues over residues 668–736, 743–768, and 799–846; these read TDTR…DKPS, GDSV…ESVR, and RDGK…KLQK. Over residues 848-859 the composition is skewed to polar residues; the sequence is ALSSKQHSVTSQ. Composition is skewed to basic and acidic residues over residues 860 to 872, 934 to 960, 978 to 1015, and 1022 to 1069; these read KRSE…KCET, KPDK…RTSE, AQKD…DGHR, and SNKD…ENRR. Serine 1071 carries the phosphoserine modification. Residues 1086-1096 show a composition bias toward polar residues; it reads MSGTTSSSSLQ. Serine 1138 carries the phosphoserine modification. A compositionally biased stretch (low complexity) spans 1272–1286; that stretch reads STDSDLLSSSGSVTV. Polar residues predominate over residues 1312-1329; sequence ASTSLANHSDVPNQYSTV. Residues serine 1315 and serine 1364 each carry the phosphoserine modification. 2 stretches are compositionally biased toward basic and acidic residues: residues 1428-1470 and 1479-1491; these read HVVD…RRDS and GKME…SGRR. Residues serine 1676 and serine 1685 each carry the phosphoserine modification. Positions 1958–1970 are enriched in basic and acidic residues; that stretch reads HHSDSQLTRKETV. Residues serine 1989, serine 2001, serine 2092, and serine 2166 each carry the phosphoserine modification. The disordered stretch occupies residues 2082-2101; sequence PMPSAVSGENSQLTASRSEE. Positions 2088 to 2097 are enriched in polar residues; sequence SGENSQLTAS. Disordered regions lie at residues 2303-2322, 2370-2469, 2536-2559, and 2575-2596; these read EENQ…LATK, EPSV…HCLT, EGGL…EKMG, and DVTL…PPKG. Residues serine 2417 and serine 2443 each carry the phosphoserine modification. Residues 2449–2459 are compositionally biased toward basic and acidic residues; it reads CLREPEQKPAE. Serine 2554 bears the Phosphoserine mark. Serine 2681 carries the phosphoserine modification. Residues 2682–3032 are disordered; that stretch reads TEALSGCSVE…DENPLKKAKR (351 aa). Acidic residues-rich tracts occupy residues 2692 to 2701 and 2715 to 2725; these read ADPEEVEEEE and SSEEELDDSPD. Residues 2727–2750 show a composition bias toward basic and acidic residues; that stretch reads LDSRIETAQRQYSETEPHDTKEEN. Polar residues predominate over residues 2758–2769; sequence SSVTSKTNSSTG. The span at 2782–2804 shows a compositional bias: basic and acidic residues; the sequence is TGEKTEPNEDDGSIKSQEDDHPI. Residues 2805-2815 show a composition bias toward basic residues; the sequence is IIKRRRGRPRK. Residues 2807-2819 constitute a DNA-binding region (a.T hook); it reads KRRRGRPRKYPAE. Residues 2822-2832 show a composition bias toward basic and acidic residues; the sequence is FKSKEDSKTET. Polar residues predominate over residues 2833–2843; it reads DITTVEQSSPS. Residues serine 2840 and serine 2841 each carry the phosphoserine modification. Positions 2853–2867 are enriched in basic and acidic residues; that stretch reads ESNKEIANLEEKSTS. Serine 2888 carries the post-translational modification Phosphoserine. At threonine 2890 the chain carries Phosphothreonine. Serine 2892, serine 2898, and serine 2907 each carry phosphoserine. Glycyl lysine isopeptide (Lys-Gly) (interchain with G-Cter in ubiquitin) cross-links involve residues lysine 2915 and lysine 2916. Residues 2919 to 2932 are compositionally biased toward acidic residues; that stretch reads ESDEEEEEEEEEEP. Phosphoserine is present on serine 2920. Positions 2975 to 2987 are enriched in basic and acidic residues; the sequence is LAKEKLSTSEKVS. Serine 3000 is subject to Phosphoserine. A compositionally biased stretch (basic and acidic residues) spans 3020-3032; it reads QKVDENPLKKAKR.

The protein belongs to the BOD1 family. Interacts (via COMPASS-Shg1 domain) with SETD1A at stalled replication forks; this interaction mediates FANCD2-dependent nucleosome remodeling at reversed forks protecting them from nucleolytic degradation.

The protein localises to the chromosome. In terms of biological role, component of the fork protection machinery required to protect stalled/damaged replication forks from uncontrolled DNA2-dependent resection. Acts by stabilizing RAD51 at stalled replication forks and protecting RAD51 nucleofilaments from the antirecombinogenic activities of FBH1 and BLM. Does not regulate spindle orientation. The polypeptide is Biorientation of chromosomes in cell division protein 1-like 1 (Mus musculus (Mouse)).